Reading from the N-terminus, the 131-residue chain is Small ribosomal subunit protein uS8 (131 aa).

Belongs to the universal ribosomal protein uS8 family. Part of the 30S ribosomal subunit. Contacts proteins S5 and S12.

One of the primary rRNA binding proteins, it binds directly to 16S rRNA central domain where it helps coordinate assembly of the platform of the 30S subunit. The polypeptide is Small ribosomal subunit protein uS8 (Bacteroides thetaiotaomicron (strain ATCC 29148 / DSM 2079 / JCM 5827 / CCUG 10774 / NCTC 10582 / VPI-5482 / E50)).